The primary structure comprises 466 residues: Putative chitinase 2 (466 aa).

The signal sequence occupies residues Met-1–Gly-17. Residues Phe-20–Tyr-380 form the GH18 domain. Cys-24 and Cys-49 are oxidised to a cystine. Glu-141 functions as the Proton donor in the catalytic mechanism. A coiled-coil region spans residues Tyr-395–Gln-447.

Belongs to the glycosyl hydrolase 18 family. As to expression, prismatic layer of shell (at protein level). Expressed primarily in the mantle with highest level in the mantle edge and lower level in the mantle pallium.

The protein localises to the secreted. It catalyses the reaction Random endo-hydrolysis of N-acetyl-beta-D-glucosaminide (1-&gt;4)-beta-linkages in chitin and chitodextrins.. The polypeptide is Putative chitinase 2 (Margaritifera margaritifera (Freshwater pearl mussel)).